The following is a 404-amino-acid chain: Spore development regulator RYP2 (404 aa).

3 disordered regions span residues 1–46 (MSAP…RKAV), 200–231 (LLKR…SSQQ), and 382–404 (SGQS…PAWG). The Velvet domain maps to 17–194 (LQSADFRLTV…ADQGVKLRIR (178 aa)). Basic and acidic residues predominate over residues 29–46 (NPERARVAGGKEKERKAV). Residues 382-397 (SGQSFSQSAGHMQSPS) show a composition bias toward polar residues.

It belongs to the velvet family. VosA subfamily. In terms of assembly, forms a heterodimeric complex with RYP3; the formation of the RYP2-RYP3 complex is light-dependent.

The protein resides in the nucleus. Component of the RYP2-RYP3 heterodimeric complex that plays a dual role in activating genes associated with spore maturation and repressing certain development-associated genes. The complex binds DNA through the DNA-binding domain of vosA that recognizes an 11-nucleotide consensus sequence 5'-CTGGCCGCGGC-3' consisting of two motifs in the promoters of key developmental regulatory genes. Required for viable spore production and regulation of sporulation in response to temperature and for the switch to yeast-form in the presence of host cells. The chain is Spore development regulator RYP2 from Ajellomyces capsulatus (Darling's disease fungus).